A 118-amino-acid polypeptide reads, in one-letter code: Group 1 truncated hemoglobin GlbN (118 aa).

H70 contributes to the heme binding site.

This sequence belongs to the truncated hemoglobin family. Group I subfamily. As to quaternary structure, monomer. Requires heme as cofactor.

Its subcellular location is the membrane. This Nostoc sp. (strain MUN 8820) protein is Group 1 truncated hemoglobin GlbN (glbN).